A 302-amino-acid chain; its full sequence is Zinc finger protein-like 1 homolog (302 aa).

The B box-type; degenerate zinc-finger motif lies at 1-43 (MGLCKCPKRLVTNQFCFEHRVNVCEHCMVQSHPKCIVQSYLQW). The RING-type; atypical zinc finger occupies 53-101 (CNLCGTSLEQGECVRLVCYHVFHWDCLNARQAALPANTAPRGHQCPGCS). The disordered stretch occupies residues 168-233 (IHSGGERERG…RDDNKYQRRT (66 aa)). The segment covering 198–208 (PPSSGDFNASS) has biased composition (polar residues). A Phosphoserine modification is found at Ser-217. The chain crosses the membrane as a helical span at residues 258–278 (WFLVLSGILAFVMFIYLLAWM).

Belongs to the ZFPL1 family.

It localises to the membrane. The chain is Zinc finger protein-like 1 homolog from Drosophila pseudoobscura pseudoobscura (Fruit fly).